The primary structure comprises 477 residues: MSHFEAVIGLEVHVQLGTKSKLFCSCPTTFGTPPNTNICEICAGMPGALPSLNKLAVEYAVKAGLALHCTINTHSFFSRKNYFYPDLPNGYQISQGTHALCTSGYLDLTIKNNNKRIGIHQIHLENDAGKSIHSPHENKSFIDLNRAGVPLIEIVSKPDINTPSEAVAYLKSLHAIVTYLGISDGNMEEGNFRCDANISLRPYNSKHLGTRTEIKNLNSFRNVQRALEFEINRQQDILEDGKTIIQETRLYNSDKDITTPMRDKETAHDYRYFPDPDLVPIYVTIQEIEKWKGEIPELSDSRQKRFVIEWGLAHQDAEILTSSRELADFFEKAVKLYPKPKKIANLIKILLLHMLNEHNITIQQCTMKPEAIAELAAIIDENLISIKIAHDIFEDLFSKQLMPKDYVIKHGLTQISDTKTIDTIVVEVLAENPTEVAAYKNGKTKLLSFFIGQVMKKMQGQANPALVNQALHNILSK.

This sequence belongs to the GatB/GatE family. GatB subfamily. In terms of assembly, heterotrimer of A, B and C subunits.

The enzyme catalyses L-glutamyl-tRNA(Gln) + L-glutamine + ATP + H2O = L-glutaminyl-tRNA(Gln) + L-glutamate + ADP + phosphate + H(+). The catalysed reaction is L-aspartyl-tRNA(Asn) + L-glutamine + ATP + H2O = L-asparaginyl-tRNA(Asn) + L-glutamate + ADP + phosphate + 2 H(+). Functionally, allows the formation of correctly charged Asn-tRNA(Asn) or Gln-tRNA(Gln) through the transamidation of misacylated Asp-tRNA(Asn) or Glu-tRNA(Gln) in organisms which lack either or both of asparaginyl-tRNA or glutaminyl-tRNA synthetases. The reaction takes place in the presence of glutamine and ATP through an activated phospho-Asp-tRNA(Asn) or phospho-Glu-tRNA(Gln). The chain is Aspartyl/glutamyl-tRNA(Asn/Gln) amidotransferase subunit B from Lawsonia intracellularis (strain PHE/MN1-00).